Here is a 329-residue protein sequence, read N- to C-terminus: MAKAPMRVAVTGAAGQIGYSLLFRIANGDLLGKDQPVILQLLEIDNEKAQNALKGVIMEIDDCAFPLLAGVSAHSDPMTAFKDVDIALLVGARPRGPGMERKDLLEANAQIFTVQGKALDAVASRNVKVLVVGNPANTNAYIAMKSAPNLPAKNFTAMLRLDHNRALSQIAAKTGKPVTAIEKLTVWGNHSPTMYPDYRFATIDGKSVKEAINDEVWNKDVFLPTVGKRGAAIIEARGVSSAASAANAAIDHVRDWVLGTNGKWVTMGIPSDGSYGIPKDTMFGFPVTTENGEYKIVQGLEIDAFSQERINLTLKELSEEREGVKHLLA.

Residue G12–G18 participates in NAD(+) binding. Substrate-binding residues include R95 and R101. NAD(+)-binding positions include N108, Q115, and V132–N134. Residues N134 and R165 each contribute to the substrate site. The active-site Proton acceptor is H190.

The protein belongs to the LDH/MDH superfamily. MDH type 2 family.

It catalyses the reaction (S)-malate + NAD(+) = oxaloacetate + NADH + H(+). Functionally, catalyzes the reversible oxidation of malate to oxaloacetate. This is Malate dehydrogenase from Herminiimonas arsenicoxydans.